The chain runs to 608 residues: MHTNSPLRADNQDLETQPLLRPNTEESQLLNDEVRINVANETLIKSRWRSIKCLIIYLLGIVLLSFFGVSIVQYIRGHVPPTDVIEKNLVQVTNFKLVEFQLDGWKDNMGSDLNNDTGKYLQVSIHSQIWFDYDKWPGTENDSDARSQRDWIRYINEKVLKTICIDLNNVTTFDGDLVFKNKLGDVVGMEPICFNLAHRQINNLQFKILVKPSIWKIVKVLKKFWNRDFESLNIKSNLDMTIFKRKFGTRFNLLKLNDEILDWKDIIDWEKISATPLRMIQNMIDGISLQGFTLRDSSSDGFHADMRLNPITILGGVDWLHLPPGTSIPFINWEIKLPDCNGEPAIAIPTLSCFNEPINLHHDKDNIVVCLQNEIEGPLPDELLYQECPQNSLTPMSQIVNAVLNQNETVTFAARGHVLEDGIDNNSLIPADMLEDIFQEASFIPITTNATFNSSELIQEFQINDLQLRWAARKKLSLVGTFLGFFDLSFYETHQQDRVRIDTIRGQIDLYHNDINFLNLPMKQWINSSSHILHDEDTGNTQMKLQFDLENDDMEVVNSLELTRTLNEILFQGFTVIHFNATIDASLTTALGPWVLTGLAGEGDTLVT.

The tract at residues 1-21 (MHTNSPLRADNQDLETQPLLR) is disordered. Residue T24 is modified to Phosphothreonine. Position 27 is a phosphoserine (S27). The chain crosses the membrane as a helical span at residues 55 to 75 (IIYLLGIVLLSFFGVSIVQYI). Residues N115, N141, N169, N407, N425, N449, N453, N527, and N580 are each glycosylated (N-linked (GlcNAc...) asparagine).

The protein resides in the membrane. This is an uncharacterized protein from Saccharomyces cerevisiae (strain ATCC 204508 / S288c) (Baker's yeast).